We begin with the raw amino-acid sequence, 138 residues long: Salivary protein 15 Iper-3 (138 aa).

A signal peptide spans M1–V21. N-linked (GlcNAc...) asparagine glycans are attached at residues N30, N42, N68, N107, and N127. The interval G119–C138 is CD4-binding.

It belongs to the salp15 family. As to quaternary structure, interacts with host CD4. Interacts with host DC-SIGN (CD209). Interacts with Borrelia outer surface protein C (OspC). Expressed in salivary glands.

It is found in the secreted. In terms of biological role, salivary tick protein that downregulates host immune system by binding to both dendritic cells, and CD4(+) T cells. Specifically binds to the CD4 coreceptor on T cells. This interaction prevents the activation of the Src kinase, Lck, and its downstream substrate Zap-70, and results in deficient activation of PLCgamma1, the repression of calcium fluxes triggered by T-cell antigen receptor (TCR) ligation, and a subsequent reduction in interleukin-2 production. This salivary protein also binds to DC-SIGN (CD209) on dendritic cells (DC) and activates the Raf-1 kinase/MEK signaling pathway that results in down-regulating expression of pro-inflammatory cytokines. Furthermore, it inhibits T cell proliferation induced by DCs. It also inhibits in vitro keratinocyte inflammation induced by Borrelia burgdorferi or by the major outer surface protein (OspC) of Borrelia. In addition, it downregulates chemokines and monocyte chemoattractant protein 1, as well as several antimicrobial peptides such as defensins, cathelicidin, psoriasin, and RNase 7. Apart from its immunomodulatory activities, it is also associated with protection of Borrelia spirochetes from antibody-mediated killing through its binding to OspC. In vivo, tests on different immune disease animal models show promising therapeutic results, e.g., in inhibiting HIV infection, experimental autoimmune encephalomyelitis, transplantation rejection, and asthma. The protein is Salivary protein 15 Iper-3 of Ixodes persulcatus (Taiga tick).